We begin with the raw amino-acid sequence, 142 residues long: Large ribosomal subunit protein uL11 (142 aa).

It belongs to the universal ribosomal protein uL11 family. In terms of assembly, part of the ribosomal stalk of the 50S ribosomal subunit. Interacts with L10 and the large rRNA to form the base of the stalk. L10 forms an elongated spine to which L12 dimers bind in a sequential fashion forming a multimeric L10(L12)X complex. One or more lysine residues are methylated.

In terms of biological role, forms part of the ribosomal stalk which helps the ribosome interact with GTP-bound translation factors. The protein is Large ribosomal subunit protein uL11 of Mycoplasma capricolum subsp. capricolum (strain California kid / ATCC 27343 / NCTC 10154).